A 332-amino-acid chain; its full sequence is Adenosine deaminase (332 aa).

Histidine 12 and histidine 14 together coordinate Zn(2+). Substrate-binding residues include histidine 14, aspartate 16, and glycine 170. Histidine 197 provides a ligand contact to Zn(2+). Residue glutamate 200 is the Proton donor of the active site. Aspartate 278 is a Zn(2+) binding site. Substrate is bound at residue aspartate 279.

The protein belongs to the metallo-dependent hydrolases superfamily. Adenosine and AMP deaminases family. Adenosine deaminase subfamily. Requires Zn(2+) as cofactor.

It catalyses the reaction adenosine + H2O + H(+) = inosine + NH4(+). The enzyme catalyses 2'-deoxyadenosine + H2O + H(+) = 2'-deoxyinosine + NH4(+). Functionally, catalyzes the hydrolytic deamination of adenosine and 2-deoxyadenosine. The polypeptide is Adenosine deaminase (Erwinia tasmaniensis (strain DSM 17950 / CFBP 7177 / CIP 109463 / NCPPB 4357 / Et1/99)).